The sequence spans 255 residues: Ribonuclease HII (255 aa).

The region spanning 72-255 (RLIAGVDEVG…KTFAPVQSFR (184 aa)) is the RNase H type-2 domain. Residues Asp-78, Glu-79, and Asp-170 each coordinate a divalent metal cation.

The protein belongs to the RNase HII family. The cofactor is Mn(2+). Mg(2+) serves as cofactor.

It is found in the cytoplasm. The catalysed reaction is Endonucleolytic cleavage to 5'-phosphomonoester.. Functionally, endonuclease that specifically degrades the RNA of RNA-DNA hybrids. This Bacillus subtilis (strain 168) protein is Ribonuclease HII (rnhB).